The following is a 694-amino-acid chain: Scarecrow-like protein 33 (694 aa).

A disordered region spans residues 289 to 313 (PAKASTFSKSPKGEKPEASGNSYTK). Positions 309 to 692 (NSYTKETPDL…RIVYGSSIWV (384 aa)) constitute a GRAS domain. The leucine repeat I (LRI) stretch occupies residues 316-376 (PDLRTMLVSC…EARLAGIGTQ (61 aa)). The interval 395–462 (YQTYISVCPF…GSSCKLRITG (68 aa)) is VHIID. Positions 428 to 432 (IHIID) match the VHIID motif. The segment at 478–510 (ETGRRLAKYCQKFNIPFEYNAIAQKWESIKLED) is leucine repeat II (LRII). The PFYRE stretch occupies residues 519–613 (VAVNSLFRFR…KEFYGREIMN (95 aa)). The tract at residues 616–692 (ACEGTERVER…RIVYGSSIWV (77 aa)) is SAW.

The protein belongs to the GRAS family. In terms of assembly, interacts with SNRNP35.

It is found in the nucleus. Probable transcription factor involved in plant development. The protein is Scarecrow-like protein 33 (SCL33) of Arabidopsis thaliana (Mouse-ear cress).